The primary structure comprises 321 residues: Small ribosomal subunit protein mS43 (321 aa).

Residues 1 to 13 constitute a mitochondrion transit peptide; that stretch reads MLRFTGARAIRKY.

It belongs to the mitochondrion-specific ribosomal protein mS43 family. Component of the mitochondrial small ribosomal subunit (mt-SSU). Mature yeast 74S mitochondrial ribosomes consist of a small (37S) and a large (54S) subunit. The 37S small subunit contains a 15S ribosomal RNA (15S mt-rRNA) and 34 different proteins. The 54S large subunit contains a 21S rRNA (21S mt-rRNA) and 46 different proteins. mS43 forms a heterodimer with mS42, building a large protuberance adjacent to the mRNA channel exit in the mt-SSU body.

It localises to the mitochondrion. Its function is as follows. Component of the mitochondrial ribosome (mitoribosome), a dedicated translation machinery responsible for the synthesis of mitochondrial genome-encoded proteins, including at least some of the essential transmembrane subunits of the mitochondrial respiratory chain. The mitoribosomes are attached to the mitochondrial inner membrane and translation products are cotranslationally integrated into the membrane. This Saccharomyces cerevisiae (strain ATCC 204508 / S288c) (Baker's yeast) protein is Small ribosomal subunit protein mS43 (MRP1).